A 178-amino-acid chain; its full sequence is 2-C-methyl-D-erythritol 2,4-cyclodiphosphate synthase (178 aa).

A divalent metal cation is bound by residues Asp-24, His-26, and His-61. A 4-CDP-2-C-methyl-D-erythritol 2-phosphate-binding site is contributed by 24–26 (DSH). 150–153 (TSGE) is a binding site for 4-CDP-2-C-methyl-D-erythritol 2-phosphate.

It belongs to the IspF family. In terms of assembly, homotrimer. Requires a divalent metal cation as cofactor.

It catalyses the reaction 4-CDP-2-C-methyl-D-erythritol 2-phosphate = 2-C-methyl-D-erythritol 2,4-cyclic diphosphate + CMP. The protein operates within isoprenoid biosynthesis; isopentenyl diphosphate biosynthesis via DXP pathway; isopentenyl diphosphate from 1-deoxy-D-xylulose 5-phosphate: step 4/6. Its function is as follows. Involved in the biosynthesis of isopentenyl diphosphate (IPP) and dimethylallyl diphosphate (DMAPP), two major building blocks of isoprenoid compounds. Catalyzes the conversion of 4-diphosphocytidyl-2-C-methyl-D-erythritol 2-phosphate (CDP-ME2P) to 2-C-methyl-D-erythritol 2,4-cyclodiphosphate (ME-CPP) with a corresponding release of cytidine 5-monophosphate (CMP). The sequence is that of 2-C-methyl-D-erythritol 2,4-cyclodiphosphate synthase from Chlamydia muridarum (strain MoPn / Nigg).